The sequence spans 154 residues: Myoglobin (154 aa).

Positions 2-148 (GLSDGEWQLV…FRNDMAAQYK (147 aa)) constitute a Globin domain. Ser-4 carries the phosphoserine modification. His-65 is a binding site for nitrite. His-65 is a binding site for O2. Thr-68 is subject to Phosphothreonine. Position 94 (His-94) interacts with heme b.

This sequence belongs to the globin family. Monomeric.

It localises to the cytoplasm. It is found in the sarcoplasm. It catalyses the reaction Fe(III)-heme b-[protein] + nitric oxide + H2O = Fe(II)-heme b-[protein] + nitrite + 2 H(+). It carries out the reaction H2O2 + AH2 = A + 2 H2O. In terms of biological role, monomeric heme protein which primary function is to store oxygen and facilitate its diffusion within muscle tissues. Reversibly binds oxygen through a pentacoordinated heme iron and enables its timely and efficient release as needed during periods of heightened demand. Depending on the oxidative conditions of tissues and cells, and in addition to its ability to bind oxygen, it also has a nitrite reductase activity whereby it regulates the production of bioactive nitric oxide. Under stress conditions, like hypoxia and anoxia, it also protects cells against reactive oxygen species thanks to its pseudoperoxidase activity. This is Myoglobin (MB) from Cervus elaphus (Red deer).